We begin with the raw amino-acid sequence, 350 residues long: MPVLHNRISNDALKAKMLAESEPRTTISFYKYFHIADPKATRDALYQLFTALNVFGRVYLAHEGINAQISVPASNVETFRAQLYAFDPALEGLRLNIALDDDGKSFWVLRMKVRDRIVADGIDDPHFDASNVGEYLQAAEVNAMLDDPDALFIDMRNHYEYEVGHFENALEIPADTFREQLPKAVEMMQAHKDKKIVMYCTGGIRCEKASAWMKHNGFNKVWHIEGGIIEYARKAREQGLPVRFIGKNFVFDERMGERISDEIIAHCHQCGAPCDSHTNCKNDGCHLLFIQCPVCAEKYKGCCSEICCEESALPPEEQRRRRAGRENGNKIFNKSRGRLNTTLCIPDPTE.

Positions 146 to 240 (DDPDALFIDM…YARKAREQGL (95 aa)) constitute a Rhodanese domain. Cys200 (cysteine persulfide intermediate) is an active-site residue.

It belongs to the TrhO family.

The enzyme catalyses uridine(34) in tRNA + AH2 + O2 = 5-hydroxyuridine(34) in tRNA + A + H2O. In terms of biological role, catalyzes oxygen-dependent 5-hydroxyuridine (ho5U) modification at position 34 in tRNAs, the first step in 5-carboxymethoxyuridine (cmo5U) biosynthesis. May be part of an alternate pathway, which is able to bypass cmo5U biogenesis in a subset of tRNAs under aerobic conditions. The protein is tRNA uridine(34) hydroxylase of Escherichia coli (strain K12).